A 144-amino-acid chain; its full sequence is Giant hemoglobin AIII chain (144 aa).

Positions 2–144 constitute a Globin domain; the sequence is ECGPLQRLKV…DVITGGIQGN (143 aa). His-95 is a binding site for heme b.

This sequence belongs to the globin family. In terms of assembly, giant hemoglobin is composed of four heme-containing chains (AI to AIV), and two linker chains (AV and AVI).

The polypeptide is Giant hemoglobin AIII chain (Lamellibrachia sp. (Deep-sea giant tube worm)).